A 199-amino-acid polypeptide reads, in one-letter code: Large ribosomal subunit protein bL25 (199 aa).

The protein belongs to the bacterial ribosomal protein bL25 family. CTC subfamily. As to quaternary structure, part of the 50S ribosomal subunit; part of the 5S rRNA/L5/L18/L25 subcomplex. Contacts the 5S rRNA. Binds to the 5S rRNA independently of L5 and L18.

In terms of biological role, this is one of the proteins that binds to the 5S RNA in the ribosome where it forms part of the central protuberance. This Pelodictyon phaeoclathratiforme (strain DSM 5477 / BU-1) protein is Large ribosomal subunit protein bL25.